An 848-amino-acid chain; its full sequence is Protein translocase subunit SecA (848 aa).

ATP is bound by residues glutamine 86, glycine 104–threonine 108, and aspartate 508. Zn(2+) contacts are provided by cysteine 833, cysteine 835, cysteine 844, and cysteine 845.

Belongs to the SecA family. As to quaternary structure, monomer and homodimer. Part of the essential Sec protein translocation apparatus which comprises SecA, SecYEG and auxiliary proteins SecDF. Other proteins may also be involved. It depends on Zn(2+) as a cofactor.

The protein resides in the cell membrane. The protein localises to the cytoplasm. The enzyme catalyses ATP + H2O + cellular proteinSide 1 = ADP + phosphate + cellular proteinSide 2.. Functionally, part of the Sec protein translocase complex. Interacts with the SecYEG preprotein conducting channel. Has a central role in coupling the hydrolysis of ATP to the transfer of proteins into and across the cell membrane, serving as an ATP-driven molecular motor driving the stepwise translocation of polypeptide chains across the membrane. In Caldicellulosiruptor saccharolyticus (strain ATCC 43494 / DSM 8903 / Tp8T 6331), this protein is Protein translocase subunit SecA.